Here is a 189-residue protein sequence, read N- to C-terminus: Protein GrpE (189 aa).

Basic and acidic residues predominate over residues Met-1–Thr-14. The tract at residues Met-1–Ala-23 is disordered.

It belongs to the GrpE family. In terms of assembly, homodimer.

It is found in the cytoplasm. In terms of biological role, participates actively in the response to hyperosmotic and heat shock by preventing the aggregation of stress-denatured proteins, in association with DnaK and GrpE. It is the nucleotide exchange factor for DnaK and may function as a thermosensor. Unfolded proteins bind initially to DnaJ; upon interaction with the DnaJ-bound protein, DnaK hydrolyzes its bound ATP, resulting in the formation of a stable complex. GrpE releases ADP from DnaK; ATP binding to DnaK triggers the release of the substrate protein, thus completing the reaction cycle. Several rounds of ATP-dependent interactions between DnaJ, DnaK and GrpE are required for fully efficient folding. The polypeptide is Protein GrpE (Lawsonia intracellularis (strain PHE/MN1-00)).